Reading from the N-terminus, the 512-residue chain is Chitin synthase regulatory factor 2 (512 aa).

Sel1-like repeat units follow at residues 224-260 (SEAL…DLNH), 261-296 (VQAA…SGQH), 297-333 (VGAM…LEAD), 337-377 (PQAL…KYGL), 378-414 (KDAQ…RKRN), and 415-452 (PEAM…YKNH). Cysteine 509 carries the post-translational modification Cysteine methyl ester. Residue cysteine 509 is the site of S-farnesyl cysteine attachment. The propeptide at 510–512 (IIS) is removed in mature form.

Its subcellular location is the membrane. Involved in chitin biosynthesis. The protein is Chitin synthase regulatory factor 2 (chr2) of Schizosaccharomyces pombe (strain 972 / ATCC 24843) (Fission yeast).